A 447-amino-acid chain; its full sequence is Na(+)-translocating NADH-quinone reductase subunit A (447 aa).

This sequence belongs to the NqrA family. In terms of assembly, composed of six subunits; NqrA, NqrB, NqrC, NqrD, NqrE and NqrF.

The catalysed reaction is a ubiquinone + n Na(+)(in) + NADH + H(+) = a ubiquinol + n Na(+)(out) + NAD(+). NQR complex catalyzes the reduction of ubiquinone-1 to ubiquinol by two successive reactions, coupled with the transport of Na(+) ions from the cytoplasm to the periplasm. NqrA to NqrE are probably involved in the second step, the conversion of ubisemiquinone to ubiquinol. The protein is Na(+)-translocating NADH-quinone reductase subunit A of Neisseria meningitidis serogroup C / serotype 2a (strain ATCC 700532 / DSM 15464 / FAM18).